The following is a 273-amino-acid chain: Thiazole synthase (273 aa).

Lys-111 serves as the catalytic Schiff-base intermediate with DXP. Residues Gly-172, 198–199 (AG), and 220–221 (NS) each bind 1-deoxy-D-xylulose 5-phosphate. Residues 251–273 (RLPRRGQASASSPTTGLISGKDK) are disordered. The segment covering 258 to 267 (ASASSPTTGL) has biased composition (polar residues).

It belongs to the ThiG family. Homotetramer. Forms heterodimers with either ThiH or ThiS.

It is found in the cytoplasm. The enzyme catalyses [ThiS sulfur-carrier protein]-C-terminal-Gly-aminoethanethioate + 2-iminoacetate + 1-deoxy-D-xylulose 5-phosphate = [ThiS sulfur-carrier protein]-C-terminal Gly-Gly + 2-[(2R,5Z)-2-carboxy-4-methylthiazol-5(2H)-ylidene]ethyl phosphate + 2 H2O + H(+). It participates in cofactor biosynthesis; thiamine diphosphate biosynthesis. Catalyzes the rearrangement of 1-deoxy-D-xylulose 5-phosphate (DXP) to produce the thiazole phosphate moiety of thiamine. Sulfur is provided by the thiocarboxylate moiety of the carrier protein ThiS. In vitro, sulfur can be provided by H(2)S. This chain is Thiazole synthase, found in Synechococcus sp. (strain CC9902).